The sequence spans 1798 residues: Non-reducing polyketide synthase nscA (1798 aa).

Positions 25–256 are N-terminal acylcarrier protein transacylase domain (SAT); sequence RRLDQHSKDR…PLPVYDGLCH (232 aa). A Ketosynthase family 3 (KS3) domain is found at 392–825; that stretch reads SSKLAIVGMA…GGNTTLLLED (434 aa). The disordered stretch occupies residues 436–455; it reads NTHYDPTGKTENTTQTPYGN. Residues 444-453 show a composition bias toward polar residues; that stretch reads KTENTTQTPY. Residues cysteine 565, histidine 700, and histidine 743 each act as for beta-ketoacyl synthase activity in the active site. Positions 931–1230 are malonyl-CoA:ACP transacylase (MAT) domain; the sequence is FTGQGAYYHG…PSASAMSSCR (300 aa). Positions 1322-1458 are N-terminal hotdog fold; the sequence is HQITAETVEA…AMIRFEDPVA (137 aa). In terms of domain architecture, PKS/mFAS DH spans 1322–1632; sequence HQITAETVEA…FRRVPRLLMD (311 aa). The active-site Proton acceptor; for dehydratase activity is the histidine 1354. The interval 1390-1628 is product template (PT) domain; sequence HMNLTDVEVL…GMIRFRRVPR (239 aa). Residues 1486–1632 are C-terminal hotdog fold; sequence ASRLSKPLAY…FRRVPRLLMD (147 aa). Aspartate 1543 serves as the catalytic Proton donor; for dehydratase activity. Positions 1685-1719 are disordered; it reads MASKAPEPAPLLATSSESSTPKESPIVTPAESERA. Positions 1698-1709 are enriched in low complexity; it reads TSSESSTPKESP. The region spanning 1721 to 1798 is the Carrier domain; sequence PVDNNMISQC…EMTAWIEEYC (78 aa). At serine 1758 the chain carries O-(pantetheine 4'-phosphoryl)serine.

The cofactor is pantetheine 4'-phosphate.

The protein operates within secondary metabolite biosynthesis. Functionally, non-reducing polyketide synthase; part of the gene cluster that mediates the biosynthesis of neosartoricin B, a prenylated anthracenone that probably exhibits T-cell antiproliferative activity, suggestive of a physiological role as an immunosuppressive agent. The non-reducing polyketide synthase nscA probably synthesizes and cyclizes the decaketide backbone. The hydrolase nscB then mediates the product release through hydrolysis followed by spontaneous decarboxylation. The prenyltransferase nscD catalyzes the addition of the dimethylallyl group to the aromatic C5. The FAD-dependent monooxygenase nscC is then responsible for the stereospecific hydroxylation at C2. Neosartoricin B can be converted into two additional compounds neosartoricins C and D. Neosartoricin C is a spirocyclic compound that is cyclized through the attack of C3 hydroxyl on C14, followed by dehydration. On the other hand, neosartoricin D is a further cyclized compound in which attack of C2 on C14 in neosartoricin C results in the formation of the acetal-containing dioxabicyclo-octanone ring. Both of these compounds are novel and possibly represent related metabolites of the gene cluster. This Arthroderma benhamiae (strain ATCC MYA-4681 / CBS 112371) (Trichophyton mentagrophytes) protein is Non-reducing polyketide synthase nscA.